Reading from the N-terminus, the 1053-residue chain is Integrin alpha-3 (1053 aa).

The first 32 residues, 1–32 (MGPGPCRVPRAPGWLLRALALMVAACGRVAFA), serve as a signal peptide directing secretion. The Extracellular segment spans residues 33–993 (FNLDTRFLVV…LVEELPAEIE (961 aa)). FG-GAP repeat units follow at residues 38–103 (RFLV…KDDC), 110–171 (EKSD…DLQL), 185–235 (CNSN…WDLS), 236–293 (EYSY…GGDL), 294–355 (QRKQ…ASFP), 357–412 (QPSL…GLLR), and 416–478 (QIIH…VARP). An N-linked (GlcNAc...) asparagine glycan is attached at asparagine 86. Intrachain disulfides connect cysteine 94/cysteine 103, cysteine 140/cysteine 162, and cysteine 185/cysteine 197. Intrachain disulfides connect cysteine 486–cysteine 491 and cysteine 497–cysteine 551. Asparagine 501, asparagine 512, asparagine 574, and asparagine 606 each carry an N-linked (GlcNAc...) asparagine glycan. A disulfide bridge connects residues cysteine 616 and cysteine 622. Asparagine 657, asparagine 699, asparagine 843, and asparagine 859 each carry an N-linked (GlcNAc...) asparagine glycan. A disulfide bond links cysteine 695 and cysteine 704. 2 disulfide bridges follow: cysteine 848–cysteine 906 and cysteine 913–cysteine 918. The disordered stretch occupies residues 865-890 (PGVTPLSPQRRRRQLDPGGDQSSPPV). 4 N-linked (GlcNAc...) asparagine glycosylation sites follow: asparagine 925, asparagine 928, asparagine 937, and asparagine 971. Residues 994 to 1021 (LWLVLVAVGAGLLLLGLIILLLWKCGFF) form a helical membrane-spanning segment. Cysteine 1018 carries S-palmitoyl cysteine lipidation. At 1022 to 1053 (KRARTRALYEAKRQKAEMKSQPSETERLTDDY) the chain is on the cytoplasmic side.

This sequence belongs to the integrin alpha chain family. Heterodimer of an alpha and a beta subunit. The alpha subunit is composed of a heavy and a light chain linked by a disulfide bond. Alpha-3 associates with beta-1. Interacts with HPS5. Interacts with FAP (seprase); the interaction occurs at the cell surface of invadopodia membrane in a collagen-dependent manner. As to expression, isoform 1 and isoform 2 are expressed in heart and brain. Only isoform 1 is detected in lung.

Its subcellular location is the cell membrane. The protein localises to the cell projection. It localises to the invadopodium membrane. The protein resides in the filopodium membrane. Functionally, integrin alpha-3/beta-1 is a receptor for fibronectin, laminin, collagen, epiligrin, thrombospondin and CSPG4. Integrin alpha-3/beta-1 provides a docking site for FAP (seprase) at invadopodia plasma membranes in a collagen-dependent manner and hence may participate in the adhesion, formation of invadopodia and matrix degradation processes, promoting cell invasion. Alpha-3/beta-1 may mediate with LGALS3 the stimulation by CSPG4 of endothelial cells migration. This Mus musculus (Mouse) protein is Integrin alpha-3 (Itga3).